The sequence spans 171 residues: ATP synthase subunit delta (171 aa).

Belongs to the ATPase delta chain family. F-type ATPases have 2 components, F(1) - the catalytic core - and F(0) - the membrane proton channel. F(1) has five subunits: alpha(3), beta(3), gamma(1), delta(1), epsilon(1). F(0) has three main subunits: a(1), b(2) and c(10-14). The alpha and beta chains form an alternating ring which encloses part of the gamma chain. F(1) is attached to F(0) by a central stalk formed by the gamma and epsilon chains, while a peripheral stalk is formed by the delta and b chains.

It localises to the cell membrane. In terms of biological role, f(1)F(0) ATP synthase produces ATP from ADP in the presence of a proton or sodium gradient. F-type ATPases consist of two structural domains, F(1) containing the extramembraneous catalytic core and F(0) containing the membrane proton channel, linked together by a central stalk and a peripheral stalk. During catalysis, ATP synthesis in the catalytic domain of F(1) is coupled via a rotary mechanism of the central stalk subunits to proton translocation. This protein is part of the stalk that links CF(0) to CF(1). It either transmits conformational changes from CF(0) to CF(1) or is implicated in proton conduction. The chain is ATP synthase subunit delta from Acholeplasma laidlawii (strain PG-8A).